The following is a 245-amino-acid chain: tRNA pseudouridine synthase A (245 aa).

Asp52 functions as the Nucleophile in the catalytic mechanism. Tyr111 contributes to the substrate binding site.

This sequence belongs to the tRNA pseudouridine synthase TruA family. Homodimer.

It catalyses the reaction uridine(38/39/40) in tRNA = pseudouridine(38/39/40) in tRNA. Formation of pseudouridine at positions 38, 39 and 40 in the anticodon stem and loop of transfer RNAs. In Wolbachia pipientis subsp. Culex pipiens (strain wPip), this protein is tRNA pseudouridine synthase A.